Here is a 202-residue protein sequence, read N- to C-terminus: MSRYRGPSLKKIRRLGALPGLTNKRSKAENDFIKKLRSDKKSQYRIRLEEKQKLRFNYGLRERQLRKYFSIAIKTRGSTGKVLMQLLEMRLDNIIFRLGMASTIPAARQLVNHRHVLVNGRIVDIPSYRCKSRDIIMARDEQQSNTFINNCINYSTHNRMEAPNHLTLLHPFKGLVNQIIDSKWVGFKINELLVVEYYFRKT.

An S4 RNA-binding domain is found at 89–152; it reads MRLDNIIFRL…QSNTFINNCI (64 aa).

The protein belongs to the universal ribosomal protein uS4 family. Part of the 30S ribosomal subunit. Contacts protein S5. The interaction surface between S4 and S5 is involved in control of translational fidelity.

It is found in the plastid. Functionally, one of the primary rRNA binding proteins, it binds directly to 16S rRNA where it nucleates assembly of the body of the 30S subunit. With S5 and S12 plays an important role in translational accuracy. The sequence is that of Small ribosomal subunit protein uS4c (rps4) from Epifagus virginiana (Beechdrops).